A 326-amino-acid polypeptide reads, in one-letter code: Type II methyltransferase M.CviAII (326 aa).

The protein belongs to the N(4)/N(6)-methyltransferase family.

It carries out the reaction a 2'-deoxyadenosine in DNA + S-adenosyl-L-methionine = an N(6)-methyl-2'-deoxyadenosine in DNA + S-adenosyl-L-homocysteine + H(+). Its function is as follows. An alpha subtype methylase that recognizes the double-stranded sequence 5'-CATG-3', methylates A-2 on both strands and protects the DNA from cleavage by the CviAII endonuclease. This is Type II methyltransferase M.CviAII (CVIAIIM) from Paramecium bursaria Chlorella virus 1 (PBCV-1).